The following is a 365-amino-acid chain: D-alanine--D-alanine ligase (365 aa).

The ATP-grasp domain maps to K156 to E360. K183 to E238 lines the ATP pocket. Mg(2+)-binding residues include D315, E327, and N329.

Belongs to the D-alanine--D-alanine ligase family. Mg(2+) serves as cofactor. Mn(2+) is required as a cofactor.

It is found in the cytoplasm. It carries out the reaction 2 D-alanine + ATP = D-alanyl-D-alanine + ADP + phosphate + H(+). It participates in cell wall biogenesis; peptidoglycan biosynthesis. Cell wall formation. The protein is D-alanine--D-alanine ligase of Corynebacterium diphtheriae (strain ATCC 700971 / NCTC 13129 / Biotype gravis).